Consider the following 388-residue polypeptide: Succinate--CoA ligase [ADP-forming] subunit beta (388 aa).

An ATP-grasp domain is found at 9–246 (KDILRQFGVP…FEEEDPAEVL (238 aa)). Residues Lys46, 53 to 55 (GRG), Glu99, Ala102, and Glu107 each bind ATP. Mg(2+) is bound by residues Asn201 and Asp215. Substrate is bound by residues Asn266 and 323–325 (GIM).

This sequence belongs to the succinate/malate CoA ligase beta subunit family. In terms of assembly, heterotetramer of two alpha and two beta subunits. Mg(2+) is required as a cofactor.

The enzyme catalyses succinate + ATP + CoA = succinyl-CoA + ADP + phosphate. The catalysed reaction is GTP + succinate + CoA = succinyl-CoA + GDP + phosphate. It functions in the pathway carbohydrate metabolism; tricarboxylic acid cycle; succinate from succinyl-CoA (ligase route): step 1/1. In terms of biological role, succinyl-CoA synthetase functions in the citric acid cycle (TCA), coupling the hydrolysis of succinyl-CoA to the synthesis of either ATP or GTP and thus represents the only step of substrate-level phosphorylation in the TCA. The beta subunit provides nucleotide specificity of the enzyme and binds the substrate succinate, while the binding sites for coenzyme A and phosphate are found in the alpha subunit. The sequence is that of Succinate--CoA ligase [ADP-forming] subunit beta from Verminephrobacter eiseniae (strain EF01-2).